A 628-amino-acid polypeptide reads, in one-letter code: tRNA (carboxymethyluridine(34)-5-O)-methyltransferase alkbh8 (628 aa).

Positions 43-123 (QSLVVANGGL…ITLYLSFVEK (81 aa)) constitute an RRM domain. The 118-residue stretch at 218 to 335 (DPDQLTINQY…RTSFTFRKVR (118 aa)) folds into the Fe2OG dioxygenase domain. 225–227 (NQY) lines the 2-oxoglutarate pocket. Residues H236 and D238 each coordinate Fe cation. H240 is a binding site for Zn(2+). H290 serves as a coordination point for Fe cation. 2 residues coordinate 2-oxoglutarate: R326 and R332. Positions 339, 341, and 347 each coordinate Zn(2+). A methyltransferase domain region spans residues 410-628 (ADVGCGNGKY…GNWCVILEKL (219 aa)). The disordered stretch occupies residues 563–582 (PTNKSKVTPENKEQNEKEHG). Positions 569-582 (VTPENKEQNEKEHG) are enriched in basic and acidic residues.

This sequence belongs to the alkB family. It depends on Fe(2+) as a cofactor.

The protein resides in the cytoplasm. The protein localises to the nucleus. It carries out the reaction 5-(carboxymethyl)uridine(34) in tRNA + S-adenosyl-L-methionine = 5-(2-methoxy-2-oxoethyl)uridine(34) in tRNA + S-adenosyl-L-homocysteine. Its function is as follows. Catalyzes the methylation of 5-carboxymethyl uridine to 5-methylcarboxymethyl uridine at the wobble position of the anticodon loop in tRNA via its methyltransferase domain. Catalyzes the last step in the formation of 5-methylcarboxymethyl uridine at the wobble position of the anticodon loop in target tRNA. Has a preference for tRNA(Arg) and tRNA(Glu), and does not bind tRNA(Lys). Binds tRNA and catalyzes the iron and alpha-ketoglutarate dependent hydroxylation of 5-methylcarboxymethyl uridine at the wobble position of the anticodon loop in tRNA via its dioxygenase domain, giving rise to 5-(S)-methoxycarbonylhydroxymethyluridine; has a preference for tRNA(Gly). Required for normal survival after DNA damage. May inhibit apoptosis and promote cell survival and angiogenesis. The chain is tRNA (carboxymethyluridine(34)-5-O)-methyltransferase alkbh8 (alkbh8) from Xenopus tropicalis (Western clawed frog).